Here is a 90-residue protein sequence, read N- to C-terminus: RNA-binding protein Hfq (90 aa).

Residues 10–70 (DGFLNLLRRE…LSTITPARPL (61 aa)) form the Sm domain.

Belongs to the Hfq family. Homohexamer.

In terms of biological role, RNA chaperone that binds small regulatory RNA (sRNAs) and mRNAs to facilitate mRNA translational regulation in response to envelope stress, environmental stress and changes in metabolite concentrations. Also binds with high specificity to tRNAs. In Symbiobacterium thermophilum (strain DSM 24528 / JCM 14929 / IAM 14863 / T), this protein is RNA-binding protein Hfq.